A 706-amino-acid chain; its full sequence is Elongation factor G (706 aa).

The tr-type G domain maps to 8-295 (ERYRNFGIMA…AVIDYLPSPL (288 aa)). Residues 17 to 24 (AHIDAGKT), 92 to 96 (DTPGH), and 146 to 149 (NKMD) contribute to the GTP site.

Belongs to the TRAFAC class translation factor GTPase superfamily. Classic translation factor GTPase family. EF-G/EF-2 subfamily.

The protein resides in the cytoplasm. In terms of biological role, catalyzes the GTP-dependent ribosomal translocation step during translation elongation. During this step, the ribosome changes from the pre-translocational (PRE) to the post-translocational (POST) state as the newly formed A-site-bound peptidyl-tRNA and P-site-bound deacylated tRNA move to the P and E sites, respectively. Catalyzes the coordinated movement of the two tRNA molecules, the mRNA and conformational changes in the ribosome. This Jannaschia sp. (strain CCS1) protein is Elongation factor G.